The following is a 404-amino-acid chain: Cystinosin homolog (404 aa).

Over 20–123 the chain is Lumenal; that stretch reads TNNLVVRQKE…FARITVIRSH (104 aa). N-linked (GlcNAc...) asparagine glycosylation is found at N46, N53, N79, and N97. A helical transmembrane segment spans residues 124–144; sequence FLAILIQIVGWTYFFAWSISF. Residues 125–191 form the PQ-loop 1 domain; the sequence is LAILIQIVGW…MYYNSHVKNE (67 aa). Residues 145 to 163 lie on the Cytoplasmic side of the membrane; sequence YPQMYLNFKRKSVVGLNFD. Residues 164-184 form a helical membrane-spanning segment; the sequence is FLSLNLVGFCAYAIFNLLMYY. The Lumenal segment spans residues 185-207; it reads NSHVKNEYNIVNPRSPPPVLLND. The helical transmembrane segment at 208-228 threads the bilayer; that stretch reads VVFAVHAFLACFITILQCLFY. Over 229 to 238 the chain is Cytoplasmic; the sequence is ERDNQSVSSK. A helical transmembrane segment spans residues 239 to 259; that stretch reads CIALMIVLISFGFCSAAATVL. Residues 260–263 lie on the Lumenal side of the membrane; it reads RKIQ. Residues 264–285 traverse the membrane as a helical segment; sequence LLSFVTSLSYIKMAVTCCKYFP. The PQ-loop 2 domain maps to 266 to 327; the sequence is SFVTSLSYIK…MILQAVNVND (62 aa). At 286–295 the chain is on the cytoplasmic side; it reads QAYFNYTRKS. A helical transmembrane segment spans residues 296–316; the sequence is TVGWSIGNIMLDFTGGTLDIL. Residues 317-337 lie on the Lumenal side of the membrane; the sequence is QMILQAVNVNDWSAFYANPVK. Residues 338-358 form a helical membrane-spanning segment; it reads FGLGFVSIFFDIIFMVQHYVL. Over 359–404 the chain is Cytoplasmic; sequence YPNAEVPHNEYHGVDNPNPDNIARDAEQYAGDSESMESTEPIIVHD.

The protein belongs to the cystinosin family.

It localises to the lysosome membrane. It is found in the cytoplasmic vesicle. The protein resides in the phagosome. It catalyses the reaction L-cystine(out) + H(+)(out) = L-cystine(in) + H(+)(in). Cystine/H(+) symporter that mediates export of cystine, the oxidized dimer of cysteine, from lysosomes. May play a role in the degradation of engulfed apoptotic cells. This chain is Cystinosin homolog (ctns-1), found in Caenorhabditis elegans.